The following is a 107-amino-acid chain: Essential MCU regulator, mitochondrial (107 aa).

Residues 1-52 (MASGAARWLVLAPVRSGALRSGPSLRKDGDVSAAWSGSGRSLVPSRSVIVTR) constitute a mitochondrion transit peptide. The interaction with MAIP1 stretch occupies residues 1 to 52 (MASGAARWLVLAPVRSGALRSGPSLRKDGDVSAAWSGSGRSLVPSRSVIVTR). Over 54-65 (GAILPKPVKMSF) the chain is Mitochondrial matrix. Residues 66-85 (GLLRVFSIVIPFLYVGTLIS) form a helical membrane-spanning segment. The GXXXX[G/A/S] signature appears at 81-85 (GTLIS). Over 86 to 107 (KNFAALLEEHDIFVPEDDDDDD) the chain is Mitochondrial intermembrane.

Belongs to the SMDT1/EMRE family. Component of the uniplex complex, composed of MCU, EMRE/SMDT1, MICU1 and MICU2 (or MICU3) in a 4:4:1:1 stoichiometry. The number of EMRE/SMDT1 molecules is hovewer variable, ranging from 1 to 4 copies per uniplex complex, leading to uniplex complexes with distinct gatekeeping profiles. Interacts (via its C-terminal poly-Asp tail) with MCUR1; the interaction is direct. Unprocessed form interacts (via transit peptide) with MAIP1. Post-translationally, undergoes proteolytic degradation in neurons: degraded by AFG3L2 and SPG7 before SMDT1/EMRE assembly with the uniporter complex, limiting the availability of SMDT1/EMRE for MCU assembly and promoting efficient assembly of gatekeeper subunits with MCU.

Its subcellular location is the mitochondrion inner membrane. Essential regulatory subunit of the mitochondrial calcium uniporter complex (uniplex), a complex that mediates calcium uptake into mitochondria. Required to bridge the calcium-sensing proteins MICU1 with the calcium-conducting subunit MCU. Acts by mediating activation of MCU and retention of MICU1 to the MCU pore, in order to ensure tight regulation of the uniplex complex and appropriate responses to intracellular calcium signaling. This chain is Essential MCU regulator, mitochondrial, found in Homo sapiens (Human).